Consider the following 5161-residue polypeptide: Nonribosomal peptide synthetase TES (5161 aa).

The adenylation 1 stretch occupies residues 37–436; it reads EEQAIARPNA…GRKDSQTKVR (400 aa). The 77-residue stretch at 569-645 folds into the Carrier 1 domain; the sequence is QPETEKEQIL…KLTSAAIPSV (77 aa). Residue serine 606 is modified to O-(pantetheine 4'-phosphoryl)serine. The interval 659-1098 is condensation 1; that stretch reads GHVAQSFAQG…LLCDVELSKL (440 aa). The tract at residues 1122-1522 is adenylation 2; the sequence is RQQTSLCPSR…GRMDGQVKIR (401 aa). Residues 1630–1742 form a methyltransferase (M) domain 1 region; sequence MNEWLDDTID…YLFKTTQQLL (113 aa). The Carrier 2 domain occupies 2068–2141; sequence TRAESKIQQL…QLAAVAQEHV (74 aa). Serine 2102 carries the O-(pantetheine 4'-phosphoryl)serine modification. The condensation 2 stretch occupies residues 2179–2593; it reads EDIYPCSPLQ…MLTQDDEQQL (415 aa). The segment at 2614-3010 is adenylation 3; it reads DQAKSRPEAD…GRKDGQVKVR (397 aa). Residues 3139–3215 enclose the Carrier 3 domain; the sequence is KPETKHEMAL…RLANRLVDPP (77 aa). At serine 3176 the chain carries O-(pantetheine 4'-phosphoryl)serine. The condensation 3 stretch occupies residues 3232 to 3668; that stretch reads LQSFAQGRLW…VVPLMTVEAH (437 aa). The adenylation 4 stretch occupies residues 3694–4098; it reads FRQQAAMQPS…GRIDGQVKIR (405 aa). Residues 4203–4329 are methyltransferase (M) domain 2; it reads EMKEWLEETI…KVDGVKTLFF (127 aa). A Carrier 4 domain is found at 4643–4725; that stretch reads RELSTAELKV…QFSQHEGEQK (83 aa). The residue at position 4680 (serine 4680) is an O-(pantetheine 4'-phosphoryl)serine. The tract at residues 4785 to 5093 is condensation 4; it reads FFLNLGTRVD…HQNLNEHPEF (309 aa).

This sequence belongs to the NRP synthetase family.

It participates in phytotoxin biosynthesis. Nonribosomal peptide synthetase; part of the gene cluster that mediates the biosynthesis of the phytotoxin tentoxin, an inhibitor the F1-ATPase activity of chloroplasts, resulting in chlorosis in sensitive plants. Tentoxin is a cyclic tetrapeptide that consists of four amino acid residues: glycine (Gly), alanine (Ala), leucine (Leu), and dehydrophenylalanine (DPhe). In addition, both the Ala and DPhe residues are N-methylated. The nonribosomal peptide synthetase TES assembles tentoxin from the four substrate amino acids. The adenylation domains of each of the 4 modules are responsible for the activation of Gly, Ala, Leu and DPhe, respectively. In addition, the N-methyltransferase domains in the second and fourth modules of TES could be responsible for N-methylation of Ala and DPhe residues. Finally, the condensation domain located in the termination module probably catalyzes the formation of the intramolecular macrocyclization and then the release of tentoxin. The cytochrome P450 monooxygenase TES1 is predicted to be involved in the formation of DPhe. This Alternaria alternata (Alternaria rot fungus) protein is Nonribosomal peptide synthetase TES.